We begin with the raw amino-acid sequence, 421 residues long: Imidazolonepropionase (421 aa).

The Fe(3+) site is built by H81 and H83. Residues H81 and H83 each coordinate Zn(2+). 4-imidazolone-5-propanoate is bound by residues R90, Y153, and H186. Y153 contacts N-formimidoyl-L-glutamate. H251 contacts Fe(3+). H251 contacts Zn(2+). Residue E254 participates in 4-imidazolone-5-propanoate binding. Residue D326 participates in Fe(3+) binding. D326 provides a ligand contact to Zn(2+). 2 residues coordinate N-formimidoyl-L-glutamate: N328 and G330. S331 contributes to the 4-imidazolone-5-propanoate binding site.

Belongs to the metallo-dependent hydrolases superfamily. HutI family. The cofactor is Zn(2+). Requires Fe(3+) as cofactor.

It localises to the cytoplasm. It catalyses the reaction 4-imidazolone-5-propanoate + H2O = N-formimidoyl-L-glutamate. Its pathway is amino-acid degradation; L-histidine degradation into L-glutamate; N-formimidoyl-L-glutamate from L-histidine: step 3/3. Functionally, catalyzes the hydrolytic cleavage of the carbon-nitrogen bond in imidazolone-5-propanoate to yield N-formimidoyl-L-glutamate. It is the third step in the universal histidine degradation pathway. The chain is Imidazolonepropionase from Streptococcus gordonii (strain Challis / ATCC 35105 / BCRC 15272 / CH1 / DL1 / V288).